The chain runs to 453 residues: MSLQLNGKSRGTSPGNAQPLPIFDALCRSLPVGTADEQFWWKLTGRHLARMMLEAGYPEHRQVECLVFHRFKVVPTFGPQPRSAEPWYRSRVAASAGDGAPISYSWRFGTADRKPYIRNYIEPLGPLTGTAADPNNDVATRAFLQDLTTTLPNLDLSLFWTFEPHLVSRFSDKADREKYAGPSVLTGVELSPDSDAIDIKMYLYPRNPEQISQLLSTIIPKAMRDAYGEDVCLDSLNIVKDFLTNHPDGRQLKPRGTTGIDCCKVQDSRVKFYVATDNTSFDHIATVMTIGGRRPLSTEVLDKLRELWYELNGLPSDFPTSEQVPTGQGQELPAGHHGVGFYYDIQPRLALPDVKAFINVRKHAKSDLAAAETVISFLERHGQGHHNPRAYLNVLRDIVPAEELETRVGAQAFYSVAVKKEELDITAYFIPQVYRRFASVQVELNGQRRSRFE.

Dimethylallyl diphosphate-binding residues include arginine 118, lysine 200, tyrosine 202, lysine 271, tyrosine 273, and tyrosine 428.

The protein belongs to the tryptophan dimethylallyltransferase family.

It participates in secondary metabolite biosynthesis. In terms of biological role, prenyltransferase; part of the gene cluster that mediates the biosynthesis of neosartoricin, a prenylated anthracenone that exhibits T-cell antiproliferative activity, suggestive of a physiological role as an immunosuppressive agent. The non-reducing polyketide synthase nscA probably synthesizes and cyclizes the decaketide backbone. The hydrolase nscB then mediates the product release through hydrolysis followed by spontaneous decarboxylation. The prenyltransferase nscD catalyzes the addition of the dimethylallyl group to the aromatic C5. The FAD-dependent monooxygenase nscC is then responsible for the stereospecific hydroxylation at C2. There is no gene encoding O-acetyltransferase in the nsc gene cluster; thus, the last step of 2-O-acetylation leading to neosartoricin may be catalyzed by an unidentified O-acetyltransferase. This is Prenyltransferase nscD from Aspergillus fumigatus (strain ATCC MYA-4609 / CBS 101355 / FGSC A1100 / Af293) (Neosartorya fumigata).